The sequence spans 187 residues: Casparian strip membrane protein 5 (187 aa).

The Cytoplasmic segment spans residues Met-1 to Arg-24. The chain crosses the membrane as a helical span at residues Ile-25 to Ile-45. Topologically, residues Leu-46–Thr-74 are extracellular. A helical membrane pass occupies residues Phe-75 to Phe-95. Residues Val-96–Arg-107 are Cytoplasmic-facing. A helical membrane pass occupies residues Ile-108 to Ala-128. Topologically, residues Ala-129–Ser-161 are extracellular. An N-linked (GlcNAc...) asparagine glycan is attached at Asn-140. The helical transmembrane segment at Leu-162–Ala-182 threads the bilayer. Residues Leu-183–His-187 lie on the Cytoplasmic side of the membrane.

This sequence belongs to the Casparian strip membrane proteins (CASP) family. In terms of assembly, homodimer and heterodimers with other CASP proteins. Interacts with CASP1, CASP3 and CASP4.

It is found in the cell membrane. Regulates membrane-cell wall junctions and localized cell wall deposition. Required for establishment of the Casparian strip membrane domain (CSD) and the subsequent formation of Casparian strips, a cell wall modification of the root endodermis that determines an apoplastic barrier between the intraorganismal apoplasm and the extraorganismal apoplasm and prevents lateral diffusion. The polypeptide is Casparian strip membrane protein 5 (CASP5) (Arabidopsis thaliana (Mouse-ear cress)).